The primary structure comprises 181 residues: Large ribosomal subunit protein uL5 (181 aa).

This sequence belongs to the universal ribosomal protein uL5 family. In terms of assembly, part of the 50S ribosomal subunit; part of the 5S rRNA/L5/L18/L25 subcomplex. Contacts the 5S rRNA and the P site tRNA. Forms a bridge to the 30S subunit in the 70S ribosome.

This is one of the proteins that bind and probably mediate the attachment of the 5S RNA into the large ribosomal subunit, where it forms part of the central protuberance. In the 70S ribosome it contacts protein S13 of the 30S subunit (bridge B1b), connecting the 2 subunits; this bridge is implicated in subunit movement. Contacts the P site tRNA; the 5S rRNA and some of its associated proteins might help stabilize positioning of ribosome-bound tRNAs. The protein is Large ribosomal subunit protein uL5 of Campylobacter hominis (strain ATCC BAA-381 / DSM 21671 / CCUG 45161 / LMG 19568 / NCTC 13146 / CH001A).